The following is a 73-amino-acid chain: Beta-defensin 108B (73 aa).

Positions 1–22 (MRIAVLLFAIFFFMSQVLPARG) are cleaved as a signal peptide. Intrachain disulfides connect cysteine 28–cysteine 55, cysteine 35–cysteine 49, and cysteine 39–cysteine 56.

Belongs to the beta-defensin family. In terms of tissue distribution, specifically expressed in testis. Low expression is detected also in liver.

Its subcellular location is the secreted. Has antibacterial activity. The protein is Beta-defensin 108B (DEFB108B) of Homo sapiens (Human).